Reading from the N-terminus, the 171-residue chain is Protein E8^E2C (171 aa).

Residues 15 to 54 (DQISTTETADPKTTEATNNESTQGTKRRRLDLPDSRDNTQ) are disordered. The segment covering 28 to 38 (TEATNNESTQG) has biased composition (polar residues).

The protein belongs to the papillomaviridae E8^E2C protein family.

It is found in the host nucleus. Plays a role in limiting the replication of viral DNA in keratinocytes. Recruits the host NCoR/SMRT complex to viral replication foci to mediate repression of both viral replication and transcription. This Homo sapiens (Human) protein is Protein E8^E2C.